Here is a 430-residue protein sequence, read N- to C-terminus: Serine--tRNA ligase (430 aa).

Residues 41–60 form a disordered region; the sequence is QSRTQDLQNERNVRSKSIGK. 236–238 serves as a coordination point for L-serine; the sequence is TAE. 267–269 is an ATP binding site; that stretch reads RSE. Glu290 is a binding site for L-serine. 354–357 is a binding site for ATP; the sequence is EISS. Ser390 lines the L-serine pocket.

Belongs to the class-II aminoacyl-tRNA synthetase family. Type-1 seryl-tRNA synthetase subfamily. In terms of assembly, homodimer. The tRNA molecule binds across the dimer.

The protein resides in the cytoplasm. The catalysed reaction is tRNA(Ser) + L-serine + ATP = L-seryl-tRNA(Ser) + AMP + diphosphate + H(+). It catalyses the reaction tRNA(Sec) + L-serine + ATP = L-seryl-tRNA(Sec) + AMP + diphosphate + H(+). The protein operates within aminoacyl-tRNA biosynthesis; selenocysteinyl-tRNA(Sec) biosynthesis; L-seryl-tRNA(Sec) from L-serine and tRNA(Sec): step 1/1. Functionally, catalyzes the attachment of serine to tRNA(Ser). Is also able to aminoacylate tRNA(Sec) with serine, to form the misacylated tRNA L-seryl-tRNA(Sec), which will be further converted into selenocysteinyl-tRNA(Sec). The chain is Serine--tRNA ligase from Alteromonas mediterranea (strain DSM 17117 / CIP 110805 / LMG 28347 / Deep ecotype).